Here is a 229-residue protein sequence, read N- to C-terminus: Ribosomal RNA small subunit methyltransferase G (229 aa).

Residues G87, L92, 138–139 (VE), and R154 each bind S-adenosyl-L-methionine.

Belongs to the methyltransferase superfamily. RNA methyltransferase RsmG family.

The protein localises to the cytoplasm. The catalysed reaction is guanosine(527) in 16S rRNA + S-adenosyl-L-methionine = N(7)-methylguanosine(527) in 16S rRNA + S-adenosyl-L-homocysteine. Functionally, specifically methylates the N7 position of guanine in position 527 of 16S rRNA. The sequence is that of Ribosomal RNA small subunit methyltransferase G from Oleidesulfovibrio alaskensis (strain ATCC BAA-1058 / DSM 17464 / G20) (Desulfovibrio alaskensis).